The chain runs to 227 residues: Lipoprotein-releasing system ATP-binding protein LolD (227 aa).

The ABC transporter domain occupies 6-227 (LEMRGITKSY…RLDAGQLSDV (222 aa)). An ATP-binding site is contributed by 43–50 (APSGAGKS).

This sequence belongs to the ABC transporter superfamily. Lipoprotein translocase (TC 3.A.1.125) family. As to quaternary structure, the complex is composed of two ATP-binding proteins (LolD) and two transmembrane proteins (LolC and LolE).

It is found in the cell inner membrane. In terms of biological role, part of the ABC transporter complex LolCDE involved in the translocation of mature outer membrane-directed lipoproteins, from the inner membrane to the periplasmic chaperone, LolA. Responsible for the formation of the LolA-lipoprotein complex in an ATP-dependent manner. This chain is Lipoprotein-releasing system ATP-binding protein LolD, found in Roseobacter denitrificans (strain ATCC 33942 / OCh 114) (Erythrobacter sp. (strain OCh 114)).